Here is a 172-residue protein sequence, read N- to C-terminus: Transcriptional repressor NrdR (172 aa).

The segment at 3–34 (CPFCRHPDSRVVDSRTTDDGTSIRRRRQCPDC) is a zinc-finger region. Residues 46-136 (LMVIKRSGVT…VYRAFDSLED (91 aa)) form the ATP-cone domain. The tract at residues 152-172 (ERSGGGTCGTGTVPVPAGTAD) is disordered. Residues 161–172 (TGTVPVPAGTAD) show a composition bias toward low complexity.

Belongs to the NrdR family. Requires Zn(2+) as cofactor.

Functionally, negatively regulates transcription of bacterial ribonucleotide reductase nrd genes and operons by binding to NrdR-boxes. In Streptomyces clavuligerus, this protein is Transcriptional repressor NrdR.